Reading from the N-terminus, the 107-residue chain is Prokineticin-2 (107 aa).

The N-terminal stretch at 1–26 (MEDPRCAPLLLLLLLPLLLTPPAGDA) is a signal peptide. Cystine bridges form between Cys33-Cys45, Cys39-Cys57, Cys44-Cys85, Cys67-Cys93, and Cys87-Cys103.

The protein belongs to the AVIT (prokineticin) family. As to expression, expressed at high levels in testis and at lower levels in brain, lung, ovary, spleen, thymus and uterus.

The protein localises to the secreted. Its function is as follows. May function as an output molecule from the suprachiasmatic nucleus (SCN) that transmits behavioral circadian rhythm. May also function locally within the SCN to synchronize output. Potently contracts gastrointestinal (GI) smooth muscle. This Rattus norvegicus (Rat) protein is Prokineticin-2 (Prok2).